The primary structure comprises 435 residues: Methylenetetrahydrofolate--tRNA-(uracil-5-)-methyltransferase TrmFO (435 aa).

7–12 (GAGLAG) contacts FAD.

This sequence belongs to the MnmG family. TrmFO subfamily. Requires FAD as cofactor.

Its subcellular location is the cytoplasm. It carries out the reaction uridine(54) in tRNA + (6R)-5,10-methylene-5,6,7,8-tetrahydrofolate + NADH + H(+) = 5-methyluridine(54) in tRNA + (6S)-5,6,7,8-tetrahydrofolate + NAD(+). The enzyme catalyses uridine(54) in tRNA + (6R)-5,10-methylene-5,6,7,8-tetrahydrofolate + NADPH + H(+) = 5-methyluridine(54) in tRNA + (6S)-5,6,7,8-tetrahydrofolate + NADP(+). Catalyzes the folate-dependent formation of 5-methyl-uridine at position 54 (M-5-U54) in all tRNAs. The polypeptide is Methylenetetrahydrofolate--tRNA-(uracil-5-)-methyltransferase TrmFO (Thermotoga petrophila (strain ATCC BAA-488 / DSM 13995 / JCM 10881 / RKU-1)).